The chain runs to 337 residues: MVREEIAESTRTLQWKCVESRVDSKRLYYGRFILSPLMKGQADTIGISMRRALLGEIEGTCITRAKSEKVPHEYSTVVGIEESVHEILFNLKEIVLRSNLYEIRDASICVRGPRYVTAQDIISPPYVEIVDTTQYIANLTEPIDLCIELEIKRDRGYRMKPITNSQDGSYPIDAVFMPVRNANHSIHSYGNGNEKQEILFLEIWTNGSLTPKEALYEASRNLIDLFVPFLHAEEEDINFEENKNKFTLPPLTFQDRLSNLKKNKKGIPLKYIFIDQLELPSRTYNCLKRSNIHTLLDLLSKGQENLIKMEYFHIEDVKQILDTLQKHFAVDLPKVLI.

The interval 1 to 233 (MVREEIAEST…DLFVPFLHAE (233 aa)) is alpha N-terminal domain (alpha-NTD). The tract at residues 266 to 337 (GIPLKYIFID…FAVDLPKVLI (72 aa)) is alpha C-terminal domain (alpha-CTD).

The protein belongs to the RNA polymerase alpha chain family. In terms of assembly, in plastids the minimal PEP RNA polymerase catalytic core is composed of four subunits: alpha, beta, beta', and beta''. When a (nuclear-encoded) sigma factor is associated with the core the holoenzyme is formed, which can initiate transcription.

It localises to the plastid. Its subcellular location is the chloroplast. It carries out the reaction RNA(n) + a ribonucleoside 5'-triphosphate = RNA(n+1) + diphosphate. Functionally, DNA-dependent RNA polymerase catalyzes the transcription of DNA into RNA using the four ribonucleoside triphosphates as substrates. In Dioscorea elephantipes (Elephant's foot yam), this protein is DNA-directed RNA polymerase subunit alpha.